The following is a 362-amino-acid chain: 3-dehydroquinate synthase (362 aa).

NAD(+) contacts are provided by residues 70 to 75 (DGEKYK), 104 to 108 (GVIGD), 128 to 129 (TT), lysine 141, lysine 150, and 168 to 171 (TLNT). Glutamate 183, histidine 246, and histidine 263 together coordinate Zn(2+).

The protein belongs to the sugar phosphate cyclases superfamily. Dehydroquinate synthase family. The cofactor is Co(2+). Zn(2+) is required as a cofactor. NAD(+) serves as cofactor.

The protein resides in the cytoplasm. It carries out the reaction 7-phospho-2-dehydro-3-deoxy-D-arabino-heptonate = 3-dehydroquinate + phosphate. It functions in the pathway metabolic intermediate biosynthesis; chorismate biosynthesis; chorismate from D-erythrose 4-phosphate and phosphoenolpyruvate: step 2/7. Catalyzes the conversion of 3-deoxy-D-arabino-heptulosonate 7-phosphate (DAHP) to dehydroquinate (DHQ). The polypeptide is 3-dehydroquinate synthase (Haemophilus influenzae (strain 86-028NP)).